The sequence spans 513 residues: Bifunctional purine biosynthesis protein PurH (513 aa).

Positions 1–145 (MTKKAIISVY…KNFKYITVII (145 aa)) constitute an MGS-like domain.

Belongs to the PurH family.

It carries out the reaction (6R)-10-formyltetrahydrofolate + 5-amino-1-(5-phospho-beta-D-ribosyl)imidazole-4-carboxamide = 5-formamido-1-(5-phospho-D-ribosyl)imidazole-4-carboxamide + (6S)-5,6,7,8-tetrahydrofolate. The catalysed reaction is IMP + H2O = 5-formamido-1-(5-phospho-D-ribosyl)imidazole-4-carboxamide. Its pathway is purine metabolism; IMP biosynthesis via de novo pathway; 5-formamido-1-(5-phospho-D-ribosyl)imidazole-4-carboxamide from 5-amino-1-(5-phospho-D-ribosyl)imidazole-4-carboxamide (10-formyl THF route): step 1/1. The protein operates within purine metabolism; IMP biosynthesis via de novo pathway; IMP from 5-formamido-1-(5-phospho-D-ribosyl)imidazole-4-carboxamide: step 1/1. In Caldicellulosiruptor saccharolyticus (strain ATCC 43494 / DSM 8903 / Tp8T 6331), this protein is Bifunctional purine biosynthesis protein PurH.